The following is a 502-amino-acid chain: Lysine--tRNA ligase (502 aa).

Mg(2+) is bound by residues Glu411 and Glu418.

The protein belongs to the class-II aminoacyl-tRNA synthetase family. Homodimer. It depends on Mg(2+) as a cofactor.

It localises to the cytoplasm. It carries out the reaction tRNA(Lys) + L-lysine + ATP = L-lysyl-tRNA(Lys) + AMP + diphosphate. The chain is Lysine--tRNA ligase from Clostridium kluyveri (strain ATCC 8527 / DSM 555 / NBRC 12016 / NCIMB 10680 / K1).